We begin with the raw amino-acid sequence, 183 residues long: MTATEQQLALIKQSIKSVPDYPKPGILFRDVTSLLENSRAYAASIALLADRFRDAGLTKIVGTEARGFLFGTPVALALGLGFVPVRKPGKLPRETISENYVLEYGTDGLEIHKDAIVPGDKVLVVDDLLATGGTICATVKLIRRLGGEVQDAAFVINLAYLGGETLLNSIGVASYSLVLFPGH.

It belongs to the purine/pyrimidine phosphoribosyltransferase family. Homodimer.

The protein localises to the cytoplasm. The catalysed reaction is AMP + diphosphate = 5-phospho-alpha-D-ribose 1-diphosphate + adenine. It participates in purine metabolism; AMP biosynthesis via salvage pathway; AMP from adenine: step 1/1. Its function is as follows. Catalyzes a salvage reaction resulting in the formation of AMP, that is energically less costly than de novo synthesis. This chain is Adenine phosphoribosyltransferase, found in Sodalis glossinidius (strain morsitans).